The sequence spans 357 residues: Chorismate synthase (357 aa).

Residue arginine 47 coordinates NADP(+). FMN contacts are provided by residues 123–125, glycine 281, 296–300, and arginine 324; these read RAS and KPTSS.

It belongs to the chorismate synthase family. In terms of assembly, homotetramer. FMNH2 is required as a cofactor.

The catalysed reaction is 5-O-(1-carboxyvinyl)-3-phosphoshikimate = chorismate + phosphate. The protein operates within metabolic intermediate biosynthesis; chorismate biosynthesis; chorismate from D-erythrose 4-phosphate and phosphoenolpyruvate: step 7/7. Catalyzes the anti-1,4-elimination of the C-3 phosphate and the C-6 proR hydrogen from 5-enolpyruvylshikimate-3-phosphate (EPSP) to yield chorismate, which is the branch point compound that serves as the starting substrate for the three terminal pathways of aromatic amino acid biosynthesis. This reaction introduces a second double bond into the aromatic ring system. This Chlamydia trachomatis serovar A (strain ATCC VR-571B / DSM 19440 / HAR-13) protein is Chorismate synthase.